The following is a 619-amino-acid chain: Alpha-L-arabinofuranosidase C (619 aa).

An N-terminal signal peptide occupies residues Met1–Ala37. In terms of domain architecture, CBM2 spans Ala38–Ala136. Cys39 and Cys133 are disulfide-bonded. In terms of domain architecture, CBM6 spans Leu163–Val289. A disordered region spans residues Ser300–Gln319.

It belongs to the glycosyl hydrolase 62 family.

It is found in the secreted. The enzyme catalyses Hydrolysis of terminal non-reducing alpha-L-arabinofuranoside residues in alpha-L-arabinosides.. It participates in glycan metabolism; hemicellulose degradation. Functionally, xylanase C contributes to hydrolyze hemicellulose, the major component of plant cell-walls. This is Alpha-L-arabinofuranosidase C (xynC) from Cellvibrio japonicus (strain Ueda107) (Pseudomonas fluorescens subsp. cellulosa).